The chain runs to 459 residues: Cysteine--tRNA ligase (459 aa).

Residue Cys-28 coordinates Zn(2+). A 'HIGH' region motif is present at residues 30-40 (ITIYDLCHIGH). Residues Cys-209, His-234, and Glu-238 each coordinate Zn(2+). A 'KMSKS' region motif is present at residues 266 to 270 (KMSKS). Residue Lys-269 participates in ATP binding.

Belongs to the class-I aminoacyl-tRNA synthetase family. In terms of assembly, monomer. Requires Zn(2+) as cofactor.

The protein localises to the cytoplasm. It catalyses the reaction tRNA(Cys) + L-cysteine + ATP = L-cysteinyl-tRNA(Cys) + AMP + diphosphate. The protein is Cysteine--tRNA ligase of Shewanella denitrificans (strain OS217 / ATCC BAA-1090 / DSM 15013).